The following is a 369-amino-acid chain: Maltose/maltodextrin import ATP-binding protein MalK (369 aa).

Positions 4–234 (VQLRNVTKAW…PADRFVAGFI (231 aa)) constitute an ABC transporter domain. 36-43 (GPSGCGKS) is an ATP binding site.

It belongs to the ABC transporter superfamily. Maltooligosaccharide importer (TC 3.A.1.1.1) family. The complex is composed of two ATP-binding proteins (MalK), two transmembrane proteins (MalG and MalK) and a solute-binding protein (MalE).

The protein resides in the cell inner membrane. It catalyses the reaction D-maltose(out) + ATP + H2O = D-maltose(in) + ADP + phosphate + H(+). Part of the ABC transporter complex MalEFGK involved in maltose/maltodextrin import. Responsible for energy coupling to the transport system. The polypeptide is Maltose/maltodextrin import ATP-binding protein MalK (Salmonella paratyphi A (strain ATCC 9150 / SARB42)).